A 100-amino-acid chain; its full sequence is Small ribosomal subunit protein uS14c (100 aa).

The protein belongs to the universal ribosomal protein uS14 family. In terms of assembly, part of the 30S ribosomal subunit.

The protein resides in the plastid. It is found in the chloroplast. In terms of biological role, binds 16S rRNA, required for the assembly of 30S particles. The sequence is that of Small ribosomal subunit protein uS14c from Capsella bursa-pastoris (Shepherd's purse).